We begin with the raw amino-acid sequence, 327 residues long: Phenylalanine--tRNA ligase alpha subunit (327 aa).

Residue Glu252 coordinates Mg(2+).

It belongs to the class-II aminoacyl-tRNA synthetase family. Phe-tRNA synthetase alpha subunit type 1 subfamily. In terms of assembly, tetramer of two alpha and two beta subunits. The cofactor is Mg(2+).

It localises to the cytoplasm. The catalysed reaction is tRNA(Phe) + L-phenylalanine + ATP = L-phenylalanyl-tRNA(Phe) + AMP + diphosphate + H(+). This chain is Phenylalanine--tRNA ligase alpha subunit, found in Salmonella newport (strain SL254).